The sequence spans 365 residues: DNA N6-methyl methyltransferase (365 aa).

This sequence belongs to the MT-A70-like family.

The catalysed reaction is a 2'-deoxyadenosine in DNA + S-adenosyl-L-methionine = an N(6)-methyl-2'-deoxyadenosine in DNA + S-adenosyl-L-homocysteine + H(+). Functionally, methylates DNA on the 6th position of adenine (N(6)-methyladenosine). N(6)-methyladenosine (m6A) DNA is involved in epigenetic transgenerational inheritance. The polypeptide is DNA N6-methyl methyltransferase (Caenorhabditis elegans).